The chain runs to 791 residues: ABC multidrug transporter mdr2 (791 aa).

N-linked (GlcNAc...) asparagine glycosylation is present at asparagine 147. Helical transmembrane passes span 182 to 202 (ALAFLFLLVSSGITMSIPFSI) and 220 to 240 (LFGLSLPMFYGALAGILTLGA). Positions 182-471 (ALAFLFLLVS…LSSFYSELMK (290 aa)) constitute an ABC transmembrane type-1 domain. Asparagine 303 carries an N-linked (GlcNAc...) asparagine glycan. The next 2 helical transmembrane spans lie at 307–324 (GLRAAVSGAAGFGLMAYV) and 326–346 (LKLSSILALLLPPIGLGAFFY). Residues asparagine 352 and asparagine 421 are each glycosylated (N-linked (GlcNAc...) asparagine). The next 2 helical transmembrane spans lie at 422 to 442 (MTILALLYVGGGMVQSGAITI) and 445 to 465 (LTSFLMYTAYAGSSMFGLSSF). The ABC transporter domain maps to 504–741 (IRFENVTFSY…PDGAFTKLME (238 aa)). Residue asparagine 508 is glycosylated (N-linked (GlcNAc...) asparagine). Residue 539 to 546 (GPSGGGKS) coordinates ATP. Asparagine 692 carries N-linked (GlcNAc...) asparagine glycosylation. Positions 754–769 (ANTPANPVAQETSWDL) are enriched in polar residues. The interval 754 to 791 (ANTPANPVAQETSWDLQSDDGTEISEDTNIPSEPRTID) is disordered. The span at 770–779 (QSDDGTEISE) shows a compositional bias: acidic residues.

Belongs to the ABC transporter superfamily. ABCB family. Mitochondrial peptide exporter (TC 3.A.1.212) subfamily.

It localises to the cell membrane. In terms of biological role, pleiotropic ABC efflux transporter that may be involved in A.fumigatus adaptation to azoles. The protein is ABC multidrug transporter mdr2 of Aspergillus fumigatus (strain ATCC MYA-4609 / CBS 101355 / FGSC A1100 / Af293) (Neosartorya fumigata).